Consider the following 192-residue polypeptide: Thymidine kinase (192 aa).

Residues 9 to 16 (ASMNAGKS) and 87 to 90 (DEAQ) each bind ATP. Residue Glu-88 is the Proton acceptor of the active site. Positions 145, 147, 182, and 185 each coordinate Zn(2+).

It belongs to the thymidine kinase family. In terms of assembly, homotetramer.

It localises to the cytoplasm. The catalysed reaction is thymidine + ATP = dTMP + ADP + H(+). This is Thymidine kinase from Novosphingobium aromaticivorans (strain ATCC 700278 / DSM 12444 / CCUG 56034 / CIP 105152 / NBRC 16084 / F199).